We begin with the raw amino-acid sequence, 443 residues long: Probable D-serine dehydratase (443 aa).

An N6-(pyridoxal phosphate)lysine modification is found at lysine 118.

It belongs to the serine/threonine dehydratase family. DsdA subfamily. Pyridoxal 5'-phosphate serves as cofactor.

It carries out the reaction D-serine = pyruvate + NH4(+). In Colwellia psychrerythraea (strain 34H / ATCC BAA-681) (Vibrio psychroerythus), this protein is Probable D-serine dehydratase.